The following is a 304-amino-acid chain: MAHYHNDYKKNDEVEFVRTGYGKDMVKVLHIQRDGKYHSIKEVATSVQLTLSSKKDYVYGDNSDIIPTDTIKNTVHVLAKFKGIKSIETFAMNICEHFLSSFNHVIRAQVYVEEVPWKRFEKNGVKHVHAFIHNPTGTHFCEVEQMRSGPPVIHSGIKDLKVLKTTQSGFEGFIKDQFTTLPEVKDRCFATKVYCKWRYHQGRDVDFEATWDTVRDIVLEKFAGPYDKGEYSPSVQKTLYDIQVHSLSRVPEMEDMEISLPNIHYFNIDMSKMGLINKEEVLLPLDNPYGRITGTAKRKLASKL.

Position 2 is an N-acetylalanine (alanine 2). Residues lysine 10 and lysine 23 each carry the N6-acetyllysine; alternate modification. N6-succinyllysine; alternate is present on residues lysine 10 and lysine 23. Lysine 23 functions as the Charge relay system in the catalytic mechanism. N6-acetyllysine occurs at positions 27 and 36. A phosphoserine mark is found at serine 39 and serine 63. Threonine 68 (charge relay system) is an active-site residue. Urate contacts are provided by threonine 68 and aspartate 69. Lysine 118, lysine 122, and lysine 164 each carry N6-acetyllysine. Position 170 (phenylalanine 170) interacts with urate. Residues lysine 175 and lysine 185 each carry the N6-acetyllysine modification. Arginine 187 contributes to the urate binding site. N6-acetyllysine; alternate is present on residues lysine 221 and lysine 228. Lysine 221 and lysine 228 each carry N6-succinyllysine; alternate. Residue serine 232 is modified to Phosphoserine. 3 residues coordinate urate: valine 235, glutamine 236, and asparagine 262. Histidine 264 acts as the Charge relay system in catalysis. Lysine 278 is modified (N6-acetyllysine). Tyrosine 289 is subject to Phosphotyrosine. Positions serine 302–leucine 304 match the Microbody targeting signal motif.

Belongs to the uricase family.

It localises to the peroxisome. It carries out the reaction urate + O2 + H2O = 5-hydroxyisourate + H2O2. It participates in purine metabolism; urate degradation; (S)-allantoin from urate: step 1/3. Functionally, catalyzes the oxidation of uric acid to 5-hydroxyisourate, which is further processed to form (S)-allantoin. This Canis lupus familiaris (Dog) protein is Uricase (UOX).